The following is a 383-amino-acid chain: S-adenosylmethionine synthase (383 aa).

An ATP-binding site is contributed by His-15. Asp-17 lines the Mg(2+) pocket. Residue Glu-43 coordinates K(+). The L-methionine site is built by Glu-56 and Gln-99. Residues 99–109 (QSPDINQGVDR) form a flexible loop region. ATP is bound by residues 164–166 (DAK), 230–231 (RF), Asp-239, 245–246 (RK), Ala-262, and Lys-266. Asp-239 is a binding site for L-methionine. Lys-270 lines the L-methionine pocket.

This sequence belongs to the AdoMet synthase family. Homotetramer; dimer of dimers. Mg(2+) serves as cofactor. The cofactor is K(+).

The protein resides in the cytoplasm. The catalysed reaction is L-methionine + ATP + H2O = S-adenosyl-L-methionine + phosphate + diphosphate. It functions in the pathway amino-acid biosynthesis; S-adenosyl-L-methionine biosynthesis; S-adenosyl-L-methionine from L-methionine: step 1/1. In terms of biological role, catalyzes the formation of S-adenosylmethionine (AdoMet) from methionine and ATP. The overall synthetic reaction is composed of two sequential steps, AdoMet formation and the subsequent tripolyphosphate hydrolysis which occurs prior to release of AdoMet from the enzyme. The polypeptide is S-adenosylmethionine synthase (Shewanella loihica (strain ATCC BAA-1088 / PV-4)).